Reading from the N-terminus, the 528-residue chain is GMP synthase [glutamine-hydrolyzing] (528 aa).

Positions 13–204 constitute a Glutamine amidotransferase type-1 domain; that stretch reads AIVILDFGSQ…VNHICGCEQD (192 aa). The active-site Nucleophile is Cys90. Catalysis depends on residues His178 and Glu180. Residues 205–403 enclose the GMPS ATP-PPase domain; that stretch reads WTTNAFIDEA…LGLPEEIVRR (199 aa). 232–238 is a binding site for ATP; it reads SGGVDSS.

In terms of assembly, homodimer.

The catalysed reaction is XMP + L-glutamine + ATP + H2O = GMP + L-glutamate + AMP + diphosphate + 2 H(+). Its pathway is purine metabolism; GMP biosynthesis; GMP from XMP (L-Gln route): step 1/1. In terms of biological role, catalyzes the synthesis of GMP from XMP. This Synechococcus sp. (strain CC9902) protein is GMP synthase [glutamine-hydrolyzing].